Consider the following 409-residue polypeptide: MAAATTTTSRPLLLSRQQAAASSLQCRLPRRPGSSLFAGQGQASTPNVRCMAVVDTASAPAPAAARKRSSYDMITLTTWLLKQEQEGVIDNEMTIVLSSISTACKQIASLVQRAPISNLTGVQGATNVQGEDQKKLDVISNEVFSNCLRWSGRTGVIASEEEDVPVAVEESYSGNYIVVFDPLDGSSNIDAAVSTGSIFGIYSPSDECHIGDDATLDEVTQMCIVNVCQPGSNLLAAGYCMYSSSVIFVLTIGTGVYVFTLDPMYGEFVLTQEKVQIPKSGKIYSFNEGNYALWDDKLKKYMDSLKEPGTSGKPYSARYIGSLVGDFHRTMLYGGIYGYPSDQKSKNGKLRLLYECAPMSFIAEQAGGKGSDGHQRVLDIMPTAVHQRVPLYVGSVEEVEKVEKFLSSE.

Residues 1 to 49 (MAAATTTTSRPLLLSRQQAAASSLQCRLPRRPGSSLFAGQGQASTPNVR) constitute a chloroplast transit peptide. Residues Glu-131, Glu-160, Asp-181, Leu-183, and Asp-184 each contribute to the Mg(2+) site. 184–187 (DGSS) serves as a coordination point for substrate. Cysteines 223 and 228 form a disulfide. Substrate-binding residues include Asn-287, Tyr-319, Tyr-337, Tyr-339, and Lys-349. Glu-355 is a binding site for Mg(2+).

Belongs to the FBPase class 1 family. As to quaternary structure, homotetramer. It depends on Mg(2+) as a cofactor. In terms of tissue distribution, in photosynthetically active tissues, and in the shoot and root apical meristems.

It is found in the plastid. The protein resides in the chloroplast. It catalyses the reaction beta-D-fructose 1,6-bisphosphate + H2O = beta-D-fructose 6-phosphate + phosphate. It participates in carbohydrate biosynthesis; Calvin cycle. This is Fructose-1,6-bisphosphatase, chloroplastic (FBP) from Triticum aestivum (Wheat).